Consider the following 151-residue polypeptide: Deoxyuridine 5'-triphosphate nucleotidohydrolase (151 aa).

Substrate is bound by residues 70–72, N83, 87–89, and K97; these read RSG and LID.

This sequence belongs to the dUTPase family. Requires Mg(2+) as cofactor.

It carries out the reaction dUTP + H2O = dUMP + diphosphate + H(+). Its pathway is pyrimidine metabolism; dUMP biosynthesis; dUMP from dCTP (dUTP route): step 2/2. Functionally, this enzyme is involved in nucleotide metabolism: it produces dUMP, the immediate precursor of thymidine nucleotides and it decreases the intracellular concentration of dUTP so that uracil cannot be incorporated into DNA. This chain is Deoxyuridine 5'-triphosphate nucleotidohydrolase, found in Idiomarina loihiensis (strain ATCC BAA-735 / DSM 15497 / L2-TR).